The sequence spans 173 residues: Bifunctional protein PyrR (173 aa).

A PRPP-binding motif is present at residues 93–105 (IILIDDVLYTGRT).

This sequence belongs to the purine/pyrimidine phosphoribosyltransferase family. PyrR subfamily. In terms of assembly, homodimer and homohexamer; in equilibrium.

It carries out the reaction UMP + diphosphate = 5-phospho-alpha-D-ribose 1-diphosphate + uracil. In terms of biological role, regulates transcriptional attenuation of the pyrimidine nucleotide (pyr) operon by binding in a uridine-dependent manner to specific sites on pyr mRNA. This disrupts an antiterminator hairpin in the RNA and favors formation of a downstream transcription terminator, leading to a reduced expression of downstream genes. Its function is as follows. Also displays a weak uracil phosphoribosyltransferase activity which is not physiologically significant. This is Bifunctional protein PyrR from Streptococcus agalactiae serotype Ia (strain ATCC 27591 / A909 / CDC SS700).